Consider the following 274-residue polypeptide: Large ribosomal subunit protein uL2cz/uL2cy (274 aa).

The interval 224–274 (NPVDHPHGGGEGRAPIGRKKPATPWGYPALGRRSRKRNKYSDNLILRRRSK) is disordered.

It belongs to the universal ribosomal protein uL2 family. As to quaternary structure, part of the 50S ribosomal subunit.

The protein resides in the plastid. The protein localises to the chloroplast. The polypeptide is Large ribosomal subunit protein uL2cz/uL2cy (rpl2-A) (Carica papaya (Papaya)).